A 38-amino-acid polypeptide reads, in one-letter code: Photosystem II reaction center protein X 1 (38 aa).

A helical transmembrane segment spans residues phenylalanine 8–phenylalanine 28.

It belongs to the PsbX family. Type 1 subfamily. PSII is composed of 1 copy each of membrane proteins PsbA, PsbB, PsbC, PsbD, PsbE, PsbF, PsbH, PsbI, PsbJ, PsbK, PsbL, PsbM, PsbT, PsbX, PsbY, PsbZ, Psb30/Ycf12, peripheral proteins PsbO, CyanoQ (PsbQ), PsbU, PsbV and a large number of cofactors. It forms dimeric complexes.

The protein resides in the cellular thylakoid membrane. Functionally, involved in the binding and/or turnover of quinones at the Q(B) site of photosystem II (PSII). PSII is a light-driven water plastoquinone oxidoreductase, using light energy to abstract electrons from H(2)O, generating a proton gradient subsequently used for ATP formation. The polypeptide is Photosystem II reaction center protein X 1 (Synechococcus sp. (strain JA-3-3Ab) (Cyanobacteria bacterium Yellowstone A-Prime)).